A 316-amino-acid chain; its full sequence is B3 domain-containing protein Os04g0581400 (316 aa).

The interval 1 to 100 (MEFATTSSRF…GSGGGGGGED (100 aa)) is disordered. Residues 13–36 (EEEEEEEGEQEMEQEQDEEEEEAE) are compositionally biased toward acidic residues. Low complexity predominate over residues 46–77 (TSAAAAATASSSSPTSVSPSATASAAASTSAS). Gly residues predominate over residues 88–98 (GASGSGGGGGG). Positions 110–215 (FDKVVTPSDV…RLFIDWKRRA (106 aa)) form a DNA-binding region, TF-B3. A disordered region spans residues 239-290 (GGAGASSCRPRRPPRSTSITAFARASTSATSTPLCRRGSSSSSAPQGRGFIS). A compositionally biased stretch (low complexity) spans 253 to 270 (RSTSITAFARASTSATST).

The protein localises to the nucleus. The protein is B3 domain-containing protein Os04g0581400 of Oryza sativa subsp. japonica (Rice).